A 204-amino-acid chain; its full sequence is MKRLVTGLLALSLFLAACGQDSDQQKDSNKEKDDKAKTEQQDKKTNDSSKDKKDNKDDSKDVNKDNKDNSANDNQQQSNSNATNNDQNQTNNNQSSNNQKSSYVAPYYGQNAAPVARQIYPFNGNKTQALQQLPNFQTALNAANNEANKFGSNNKVYNDYSIEEHNGNYKYVFSFKDPNANGKYSIVTVDYTGQAMVTDPNYQQ.

Positions 1-17 are cleaved as a signal peptide; the sequence is MKRLVTGLLALSLFLAA. The segment at 17–102 is disordered; the sequence is ACGQDSDQQK…NQSSNNQKSS (86 aa). Cys-18 is lipidated: N-palmitoyl cysteine. Cys-18 carries S-diacylglycerol cysteine lipidation. Over residues 23–70 the composition is skewed to basic and acidic residues; sequence DQQKDSNKEKDDKAKTEQQDKKTNDSSKDKKDNKDDSKDVNKDNKDNS. A compositionally biased stretch (low complexity) spans 71 to 102; sequence ANDNQQQSNSNATNNDQNQTNNNQSSNNQKSS.

The protein resides in the cell membrane. This is an uncharacterized protein from Staphylococcus aureus (strain Mu50 / ATCC 700699).